The chain runs to 526 residues: Tyrosine-protein kinase transforming protein Src (526 aa).

Over residues M1–R15 the composition is skewed to basic residues. Residues M1 to K59 form a disordered region. The N-myristoyl glycine; by host moiety is linked to residue G2. Positions R16–H25 are enriched in basic and acidic residues. Residues G81–S142 enclose the SH3 domain. The SH2 domain occupies W148 to C245. The 251-residue stretch at L267–L517 folds into the Protein kinase domain. Residues L273–V281 and K295 each bind ATP. The active-site Proton acceptor is the D386. Y416 is modified (phosphotyrosine; by autocatalysis).

The protein belongs to the protein kinase superfamily. Tyr protein kinase family. SRC subfamily. As to quaternary structure, homodimer. In terms of processing, the phosphorylated form is termed pp60v-src.

The enzyme catalyses L-tyrosyl-[protein] + ATP = O-phospho-L-tyrosyl-[protein] + ADP + H(+). This phosphoprotein, required for both the initiation and the maintenance of neoplastic transformation, is a protein kinase that catalyzes the phosphorylation of tyrosine residues in vitro. The sequence is that of Tyrosine-protein kinase transforming protein Src (V-SRC) from Rous sarcoma virus subgroup E (strain Schmidt-Ruppin) (RSV-SR-E).